Reading from the N-terminus, the 370-residue chain is GTPase Obg (370 aa).

In terms of domain architecture, Obg spans 1-159 (MKFVDEAYID…KKLKLELRVL (159 aa)). Positions 160-333 (ADVGLLGMPN…LVQAIYQHVA (174 aa)) constitute an OBG-type G domain. Residues 166–173 (GMPNAGKS), 191–195 (FTTLH), 213–216 (DVPG), 283–286 (NKLD), and 314–316 (SAL) each bind GTP. Residues S173 and T193 each contribute to the Mg(2+) site. Positions 346 to 370 (FAEPEADESDDEPRFAPQADDPRFR) are disordered.

Belongs to the TRAFAC class OBG-HflX-like GTPase superfamily. OBG GTPase family. As to quaternary structure, monomer. Mg(2+) is required as a cofactor.

Its subcellular location is the cytoplasm. Functionally, an essential GTPase which binds GTP, GDP and possibly (p)ppGpp with moderate affinity, with high nucleotide exchange rates and a fairly low GTP hydrolysis rate. Plays a role in control of the cell cycle, stress response, ribosome biogenesis and in those bacteria that undergo differentiation, in morphogenesis control. This chain is GTPase Obg, found in Methylibium petroleiphilum (strain ATCC BAA-1232 / LMG 22953 / PM1).